An 802-amino-acid polypeptide reads, in one-letter code: E3 ubiquitin-protein ligase UHRF2 (802 aa).

A Ubiquitin-like domain is found at 1–78; sequence MWIQVRTIDG…IQLLVRPDPD (78 aa). 2 disordered regions span residues 80–116 and 153–197; these read LPGT…TSAR and RASD…STSN. 3 stretches are compositionally biased toward polar residues: residues 82–96, 153–177, and 188–197; these read GTST…SNSP, RASD…TNGN, and KLDSVPSTSN. Residues 117 to 311 are required for interaction with histone H3; that stretch reads ARLIDPGFGI…VDEIFKIERP (195 aa). An interaction with PCNP region spans residues 194 to 288; that stretch reads STSNSDCVAA…KELRVKIFLG (95 aa). A PHD-type zinc finger spans residues 344–395; the sequence is SCSCRVCGGKHEPNMQLLCDECNVAYHIYCLNPPLDKVPEEEYWYCPSCKTD. Residues 414-644 form a methyl-CpG binding and interaction with HDAC1 region; sequence KMPSASTESR…LQYPAGYPSD (231 aa). In terms of domain architecture, YDG spans 448-612; it reads GPIPGIPVGS…FLVWRYLLRR (165 aa). The tract at residues 640 to 674 is disordered; the sequence is GYPSDKEGKKPKGQSKKQPSGTTKRPISDDDCPSA. A Phosphoserine modification is found at S667. Residues 733-772 form an RING-type zinc finger; sequence CVCCQELVYQPVTTECFHNVCKDCLQRSFKAQVFSCPACR.

Homodimer; disulfide-linked. Binds methylated CpG containing oligonucleotides. Interacts with H3; the interaction has a preference for the 'Lys-9' trimethylated form of H3 (H3K9me3). Interacts with PCNP. Interacts with HDAC1. Interacts directly with CCNE1; the interaction ubiquitinates CCNE1 and appears independent of CCNE1 phosphorylation. Interacts with CCND1; the interaction ubiquitinates CCND1 and appears independent of CCND1 phosphorylation. Interacts with p53/TP53 and RB1. Interacts with UBE2I. Interacts with ZNF618. Interacts with UHRF1. Interacts with FANCD2. Interacts with ATR. Interacts with PCNA. Post-translationally, may be autoubiquitinated; which may lead to proteasomal degradation. In terms of processing, phosphorylated. Phosphorylation may be mediated by CDK2. Autosumoylated.

The protein resides in the nucleus. Its subcellular location is the chromosome. It catalyses the reaction S-ubiquitinyl-[E2 ubiquitin-conjugating enzyme]-L-cysteine + [acceptor protein]-L-lysine = [E2 ubiquitin-conjugating enzyme]-L-cysteine + N(6)-ubiquitinyl-[acceptor protein]-L-lysine.. Its pathway is protein modification; protein ubiquitination. E3 ligase activity is robustly activated by 5-hydroxymethylcytosine. Its function is as follows. E3 ubiquitin ligase that plays important roles in DNA methylation, histone modifications, cell cycle and DNA repair. Acts as a specific reader for 5-hydroxymethylcytosine (5hmC) and thereby recruits various substrates to these sites to ubiquitinate them. This activity also allows the maintenance of 5mC levels at specific genomic loci and regulates neuron-related gene expression. Participates in cell cycle regulation by ubiquitinating cyclins CCND1 and CCNE1 and thereby inducing G1 arrest. Also ubiquitinates PCNP leading to its degradation by the proteasome. Plays an active role in DNA damage repair by ubiquitinating p21/CDKN1A leading to its proteasomal degradation. Also promotes DNA repair by acting as an interstrand cross-links (ICLs) sensor. Mechanistically, cooperates with UHRF1 to ensure recruitment of FANCD2 to ICLs, leading to FANCD2 monoubiquitination and subsequent activation. Contributes to UV-induced DNA damage response by physically interacting with ATR in response to irradiation, thereby promoting ATR activation. This is E3 ubiquitin-protein ligase UHRF2 (UHRF2) from Homo sapiens (Human).